The primary structure comprises 211 residues: ATP-dependent Clp protease proteolytic subunit (211 aa).

S114 (nucleophile) is an active-site residue. H139 is a catalytic residue.

The protein belongs to the peptidase S14 family. As to quaternary structure, fourteen ClpP subunits assemble into 2 heptameric rings which stack back to back to give a disk-like structure with a central cavity, resembling the structure of eukaryotic proteasomes.

The protein resides in the cytoplasm. It carries out the reaction Hydrolysis of proteins to small peptides in the presence of ATP and magnesium. alpha-casein is the usual test substrate. In the absence of ATP, only oligopeptides shorter than five residues are hydrolyzed (such as succinyl-Leu-Tyr-|-NHMec, and Leu-Tyr-Leu-|-Tyr-Trp, in which cleavage of the -Tyr-|-Leu- and -Tyr-|-Trp bonds also occurs).. Cleaves peptides in various proteins in a process that requires ATP hydrolysis. Has a chymotrypsin-like activity. Plays a major role in the degradation of misfolded proteins. This chain is ATP-dependent Clp protease proteolytic subunit, found in Pseudomonas fluorescens (strain ATCC BAA-477 / NRRL B-23932 / Pf-5).